A 276-amino-acid chain; its full sequence is Transmembrane protein 45B (276 aa).

The next 6 helical transmembrane spans lie at 7-27, 48-68, 95-115, 147-167, 181-201, and 213-233; these read HALPGSFFLIVGLWWSLKYPL, IIEAAIRTLFAVIGILVEQFV, LFFAVSGIMDMLTYLITHVPL, IHSLLLYTVFGGALSLAVEVV, LLLLQGTWFWQIGFVLFPPFG, and IMFVTMCFCWHYLAALCILAA. Ser-271 and Ser-273 each carry phosphoserine.

It belongs to the TMEM45 family.

Its subcellular location is the endosome membrane. It localises to the lysosome membrane. The protein localises to the golgi apparatus. The protein resides in the trans-Golgi network membrane. Functionally, plays a role in innate immunity. This chain is Transmembrane protein 45B (TMEM45B), found in Bos taurus (Bovine).